A 317-amino-acid polypeptide reads, in one-letter code: Melanocyte-stimulating hormone receptor (317 aa).

Over 1 to 37 (MPVLGSQRRLLGSLNCTPPATFPLTLAPNRTGPQCLE) the chain is Extracellular. Residue asparagine 29 is glycosylated (N-linked (GlcNAc...) asparagine). A helical membrane pass occupies residues 38–63 (VSIPDGLFLSLGLVSLVENVLVVAAI). At 64-72 (AKNRNLHSP) the chain is on the cytoplasmic side. A helical membrane pass occupies residues 73-93 (MYYFICCLAMSDLLVSVSNVL). Over 94 to 118 (ETAVMLLLEAGALAAQAAVVQQLDN) the chain is Extracellular. The chain crosses the membrane as a helical span at residues 119 to 140 (VIDVLICGSMVSSLCFLGAIAV). Residues 141–163 (DRYISIFYALRYHSVVTLPRAWR) are Cytoplasmic-facing. A helical membrane pass occupies residues 164-183 (IIAAIWVASILTSLLFITYY). At 184-191 (NHTVVLLC) the chain is on the extracellular side. A helical transmembrane segment spans residues 192–211 (LVGFFIAMLALMAVLYVHML). Residues 212–240 (ARACQHARGIARLQKRQRPIHQGFGLKGA) lie on the Cytoplasmic side of the membrane. A helical membrane pass occupies residues 241-266 (ATLTILLGVFFLCWGPFFLHLSLIVL). Residues 267-279 (CPQHPTCGCIFKN) lie on the Extracellular side of the membrane. The chain crosses the membrane as a helical span at residues 280–300 (FNLFLALIICNAIVDPLIYAF). Residues 301-317 (RSQELRKTLQEVLQCSW) lie on the Cytoplasmic side of the membrane. A lipid anchor (S-palmitoyl cysteine) is attached at cysteine 315.

This sequence belongs to the G-protein coupled receptor 1 family. In terms of assembly, interacts with MGRN1, but does not undergo MGRN1-mediated ubiquitination; this interaction competes with GNAS-binding and thus inhibits agonist-induced cAMP production. Interacts with OPN3; the interaction results in a decrease in MC1R-mediated cAMP signaling and ultimately a decrease in melanin production in melanocytes.

It localises to the cell membrane. Functionally, receptor for MSH (alpha, beta and gamma) and ACTH. The activity of this receptor is mediated by G proteins which activate adenylate cyclase. Mediates melanogenesis, the production of eumelanin (black/brown) and phaeomelanin (red/yellow), via regulation of cAMP signaling in melanocytes. The polypeptide is Melanocyte-stimulating hormone receptor (MC1R) (Dama dama (Fallow deer)).